Reading from the N-terminus, the 457-residue chain is Phosphomethylpyrimidine synthase (457 aa).

Residues asparagine 80, methionine 109, tyrosine 139, histidine 175, 195–197 (SRG), 236–239 (DSLR), and glutamate 275 contribute to the substrate site. Zn(2+) is bound at residue histidine 279. Tyrosine 302 provides a ligand contact to substrate. Histidine 343 lines the Zn(2+) pocket. Cysteine 423, cysteine 426, and cysteine 431 together coordinate [4Fe-4S] cluster.

This sequence belongs to the ThiC family. It depends on [4Fe-4S] cluster as a cofactor.

It carries out the reaction 5-amino-1-(5-phospho-beta-D-ribosyl)imidazole + S-adenosyl-L-methionine = 4-amino-2-methyl-5-(phosphooxymethyl)pyrimidine + CO + 5'-deoxyadenosine + formate + L-methionine + 3 H(+). Its pathway is cofactor biosynthesis; thiamine diphosphate biosynthesis. In terms of biological role, catalyzes the synthesis of the hydroxymethylpyrimidine phosphate (HMP-P) moiety of thiamine from aminoimidazole ribotide (AIR) in a radical S-adenosyl-L-methionine (SAM)-dependent reaction. This is Phosphomethylpyrimidine synthase from Trichormus variabilis (strain ATCC 29413 / PCC 7937) (Anabaena variabilis).